Here is a 127-residue protein sequence, read N- to C-terminus: S-adenosylmethionine decarboxylase proenzyme 2 (127 aa).

Catalysis depends on Ser-63, which acts as the Schiff-base intermediate with substrate; via pyruvic acid. Ser-63 bears the Pyruvic acid (Ser); by autocatalysis mark. His-68 serves as the catalytic Proton acceptor; for processing activity. The active-site Proton donor; for catalytic activity is Cys-83.

Belongs to the prokaryotic AdoMetDC family. Type 1 subfamily. In terms of assembly, heterotetramer of two alpha and two beta chains arranged as a dimer of alpha/beta heterodimers. Requires pyruvate as cofactor. Is synthesized initially as an inactive proenzyme. Formation of the active enzyme involves a self-maturation process in which the active site pyruvoyl group is generated from an internal serine residue via an autocatalytic post-translational modification. Two non-identical subunits are generated from the proenzyme in this reaction, and the pyruvate is formed at the N-terminus of the alpha chain, which is derived from the carboxyl end of the proenzyme. The post-translation cleavage follows an unusual pathway, termed non-hydrolytic serinolysis, in which the side chain hydroxyl group of the serine supplies its oxygen atom to form the C-terminus of the beta chain, while the remainder of the serine residue undergoes an oxidative deamination to produce ammonia and the pyruvoyl group blocking the N-terminus of the alpha chain.

It catalyses the reaction S-adenosyl-L-methionine + H(+) = S-adenosyl 3-(methylsulfanyl)propylamine + CO2. It participates in amine and polyamine biosynthesis; S-adenosylmethioninamine biosynthesis; S-adenosylmethioninamine from S-adenosyl-L-methionine: step 1/1. Catalyzes the decarboxylation of S-adenosylmethionine to S-adenosylmethioninamine (dcAdoMet), the propylamine donor required for the synthesis of the polyamines spermine and spermidine from the diamine putrescine. The protein is S-adenosylmethionine decarboxylase proenzyme 2 of Halalkalibacterium halodurans (strain ATCC BAA-125 / DSM 18197 / FERM 7344 / JCM 9153 / C-125) (Bacillus halodurans).